The sequence spans 281 residues: Pantothenate synthetase (281 aa).

Methionine 30–histidine 37 is an ATP binding site. The active-site Proton donor is the histidine 37. Glutamine 61 contacts (R)-pantoate. Glutamine 61 lines the beta-alanine pocket. Glycine 147–aspartate 150 is an ATP binding site. Glutamine 153 contacts (R)-pantoate. Residues isoleucine 176 and lysine 184–arginine 187 contribute to the ATP site.

Belongs to the pantothenate synthetase family. As to quaternary structure, homodimer.

The protein resides in the cytoplasm. The enzyme catalyses (R)-pantoate + beta-alanine + ATP = (R)-pantothenate + AMP + diphosphate + H(+). It functions in the pathway cofactor biosynthesis; (R)-pantothenate biosynthesis; (R)-pantothenate from (R)-pantoate and beta-alanine: step 1/1. In terms of biological role, catalyzes the condensation of pantoate with beta-alanine in an ATP-dependent reaction via a pantoyl-adenylate intermediate. The protein is Pantothenate synthetase of Clostridium botulinum (strain ATCC 19397 / Type A).